The primary structure comprises 817 residues: Ribonuclease R 1 (817 aa).

Residues R259–E584 enclose the RNB domain. The S1 motif domain occupies G637–L717. The tract at residues A728–G817 is disordered. Residues K729–S742 show a composition bias toward basic residues. Basic and acidic residues-rich tracts occupy residues R767–K777 and K795–R810.

This sequence belongs to the RNR ribonuclease family. RNase R subfamily.

The protein resides in the cytoplasm. It carries out the reaction Exonucleolytic cleavage in the 3'- to 5'-direction to yield nucleoside 5'-phosphates.. Its function is as follows. 3'-5' exoribonuclease that releases 5'-nucleoside monophosphates and is involved in maturation of structured RNAs. This is Ribonuclease R 1 (rnr1) from Lactococcus lactis subsp. lactis (strain IL1403) (Streptococcus lactis).